A 156-amino-acid chain; its full sequence is Transcription antitermination protein NusB (156 aa).

Belongs to the NusB family.

Functionally, involved in transcription antitermination. Required for transcription of ribosomal RNA (rRNA) genes. Binds specifically to the boxA antiterminator sequence of the ribosomal RNA (rrn) operons. The sequence is that of Transcription antitermination protein NusB from Rickettsia bellii (strain OSU 85-389).